The chain runs to 539 residues: Putative S-adenosyl-L-methionine-dependent methyltransferase MAP_4079 (539 aa).

Residues Asp134 and 163 to 164 (DL) contribute to the S-adenosyl-L-methionine site. Residues 290–392 (AGYGRGRRRP…RGEPGERGGQ (103 aa)) are disordered. The span at 301-313 (SATSCRGTCSSPR) shows a compositional bias: polar residues. The segment covering 341 to 351 (HGFGNQCGGPD) has biased composition (gly residues).

This sequence belongs to the UPF0677 family.

Functionally, exhibits S-adenosyl-L-methionine-dependent methyltransferase activity. This Mycolicibacterium paratuberculosis (strain ATCC BAA-968 / K-10) (Mycobacterium paratuberculosis) protein is Putative S-adenosyl-L-methionine-dependent methyltransferase MAP_4079.